The primary structure comprises 470 residues: FAD-dependent monooxygenase SAT7 (470 aa).

A helical membrane pass occupies residues 28–48 (GLSVAIVGGGIVGIALALGLV). FAD contacts are provided by E58, A71, and R143. Residues R227 and Y260 contribute to the active site. FAD contacts are provided by D351 and A364.

It belongs to the paxM FAD-dependent monooxygenase family. The cofactor is FAD.

The protein resides in the membrane. It functions in the pathway mycotoxin biosynthesis. FAD-dependent monooxygenase; part of the satratoxin SC1 cluster involved in the biosynthesis of satratoxins, trichothecene mycotoxins that are associated with human food poisonings. Satratoxins are suggested to be made by products of multiple gene clusters (SC1, SC2 and SC3) that encode 21 proteins in all, including polyketide synthases, acetyltransferases, and other enzymes expected to modify the trichothecene skeleton. SC1 encodes 10 proteins, SAT1 to SAT10. The largest are SAT8, which encodes a putative polyketide synthase (PKS) with a conventional non-reducing architecture, and SAT10, a putative protein containing four ankyrin repeats and thus may be involved in protein scaffolding. The putative short-chain reductase SAT3 may assist the PKS in some capacity. SAT6 contains a secretory lipase domain and acts probably as a trichothecene esterase. SAT5 encodes a putative acetyltransferase, and so, with SAT6, may affect endogenous protection from toxicity. The probable transcription factor SAT9 may regulate the expression of the SC1 cluster. SC2 encodes proteins SAT11 to SAT16, the largest of which encodes the putative reducing PKS SAT13. SAT11 is a cytochrome P450 monooxygenase, while SAT14 and SAT16 are probable acetyltransferases. The SC2 cluster may be regulated by the transcription factor SAT15. SC3 is a small cluster that encodes 5 proteins, SAT17 to SAT21. SAT21 is a putative MFS-type transporter which may have a role in exporting secondary metabolites. The four other proteins putatively encoded in SC3 include the taurine hydroxylase-like protein SAT17, the O-methyltransferase SAT18, the acetyltransferase SAT19, and the Cys6-type zinc finger SAT20, the latter being probably involved in regulation of SC3 expression. This chain is FAD-dependent monooxygenase SAT7, found in Stachybotrys chartarum (strain CBS 109288 / IBT 7711) (Toxic black mold).